We begin with the raw amino-acid sequence, 321 residues long: Tetraacyldisaccharide 4'-kinase (321 aa).

Ser54–Thr61 is an ATP binding site.

It belongs to the LpxK family.

The enzyme catalyses a lipid A disaccharide + ATP = a lipid IVA + ADP + H(+). It participates in glycolipid biosynthesis; lipid IV(A) biosynthesis; lipid IV(A) from (3R)-3-hydroxytetradecanoyl-[acyl-carrier-protein] and UDP-N-acetyl-alpha-D-glucosamine: step 6/6. Its function is as follows. Transfers the gamma-phosphate of ATP to the 4'-position of a tetraacyldisaccharide 1-phosphate intermediate (termed DS-1-P) to form tetraacyldisaccharide 1,4'-bis-phosphate (lipid IVA). This is Tetraacyldisaccharide 4'-kinase from Rickettsia rickettsii.